We begin with the raw amino-acid sequence, 380 residues long: Large ribosomal subunit protein mL38 (380 aa).

The transit peptide at 1-26 (MAAPWWRVVLNGSRNWRGFSTSAALS) directs the protein to the mitochondrion. Residues 101–122 (QQLLERKRVLRELRTSVEEERA) are a coiled coil.

This sequence belongs to the phosphatidylethanolamine-binding protein family. Mitochondrion-specific ribosomal protein mL38 subfamily. In terms of assembly, component of the mitochondrial ribosome large subunit (39S) which comprises a 16S rRNA and about 50 distinct proteins.

Its subcellular location is the mitochondrion. This is Large ribosomal subunit protein mL38 (MRPL38) from Bos taurus (Bovine).